Here is a 165-residue protein sequence, read N- to C-terminus: Probable bacterial non-heme ferritin-like protein (165 aa).

One can recognise a Ferritin-like diiron domain in the interval 1–145; that stretch reads MLSENVVKLL…SILDKLNFLG (145 aa). Fe cation-binding residues include Glu-17, Glu-50, His-53, Glu-94, and Gln-127.

The protein belongs to the ferritin family. Prokaryotic subfamily.

The protein localises to the cytoplasm. The protein is Probable bacterial non-heme ferritin-like protein (ftnB) of Haemophilus influenzae (strain ATCC 51907 / DSM 11121 / KW20 / Rd).